The chain runs to 268 residues: Malonyl-[acyl-carrier protein] O-methyltransferase 1 (268 aa).

It belongs to the methyltransferase superfamily.

The catalysed reaction is malonyl-[ACP] + S-adenosyl-L-methionine = malonyl-[ACP] methyl ester + S-adenosyl-L-homocysteine. Its pathway is cofactor biosynthesis; biotin biosynthesis. Functionally, converts the free carboxyl group of a malonyl-thioester to its methyl ester by transfer of a methyl group from S-adenosyl-L-methionine (SAM). It allows to synthesize pimeloyl-ACP via the fatty acid synthetic pathway. The sequence is that of Malonyl-[acyl-carrier protein] O-methyltransferase 1 from Ilyobacter polytropus (strain ATCC 51220 / DSM 2926 / LMG 16218 / CuHBu1).